The chain runs to 789 residues: Protein translocase subunit SecA (789 aa).

ATP-binding positions include Gln-85, 103–107, and Asp-492; that span reads GEGKT.

This sequence belongs to the SecA family. Monomer and homodimer. Part of the essential Sec protein translocation apparatus which comprises SecA, SecYEG and auxiliary proteins SecDF. Other proteins may also be involved.

It localises to the cell membrane. It is found in the cytoplasm. It carries out the reaction ATP + H2O + cellular proteinSide 1 = ADP + phosphate + cellular proteinSide 2.. Part of the Sec protein translocase complex. Interacts with the SecYEG preprotein conducting channel. Has a central role in coupling the hydrolysis of ATP to the transfer of proteins into and across the cell membrane, serving as an ATP-driven molecular motor driving the stepwise translocation of polypeptide chains across the membrane. The protein is Protein translocase subunit SecA of Limosilactobacillus fermentum (strain NBRC 3956 / LMG 18251) (Lactobacillus fermentum).